The following is an 833-amino-acid chain: Leucine--tRNA ligase (833 aa).

Positions proline 41 to histidine 52 match the 'HIGH' region motif. The 'KMSKS' region motif lies at lysine 610–serine 614. Lysine 613 lines the ATP pocket.

Belongs to the class-I aminoacyl-tRNA synthetase family.

It localises to the cytoplasm. It carries out the reaction tRNA(Leu) + L-leucine + ATP = L-leucyl-tRNA(Leu) + AMP + diphosphate. This Streptococcus uberis (strain ATCC BAA-854 / 0140J) protein is Leucine--tRNA ligase.